Consider the following 130-residue polypeptide: MMYSKLLTLTTLLLPTALALPSLVERACDYTCGSNCYSSSDVSTAQAAGYQLHEDGETVGSNSYPHKYNNYEGFDFSVSSPYYEWPILSSGDVYSGGSPGADRVVFNENNQLAGVITHTGASGNNFVECT.

The N-terminal stretch at 1–26 (MMYSKLLTLTTLLLPTALALPSLVER) is a signal peptide. Cystine bridges form between Cys-28–Cys-36 and Cys-32–Cys-129. The active site involves His-66. The Proton acceptor role is filled by Glu-84. The Proton donor role is filled by His-118.

It belongs to the ribonuclease N1/T1 family. As to quaternary structure, monomer.

The catalysed reaction is [RNA] containing guanosine + H2O = an [RNA fragment]-3'-guanosine-3'-phosphate + a 5'-hydroxy-ribonucleotide-3'-[RNA fragment].. In Aspergillus oryzae (strain ATCC 42149 / RIB 40) (Yellow koji mold), this protein is Guanyl-specific ribonuclease T1 (rntA).